A 364-amino-acid polypeptide reads, in one-letter code: Probable transcription factor At4g00390 (364 aa).

The disordered stretch occupies residues 1–149 (MTKKLDPPTA…STKRVKKDEE (149 aa)). The span at 13–32 (SDEDDVETSEDDSSSSEEDE) shows a compositional bias: acidic residues. Low complexity predominate over residues 39 to 80 (ATTAAAPAKSTAVSAATPAKSTSVSAAAPSKSTAVSAAADSD). Positions 81 to 93 (SGSESETDSDSES) are enriched in acidic residues.

Belongs to the GeBP family.

The sequence is that of Probable transcription factor At4g00390 from Arabidopsis thaliana (Mouse-ear cress).